A 103-amino-acid polypeptide reads, in one-letter code: Small ribosomal subunit protein uS10 (103 aa).

The protein belongs to the universal ribosomal protein uS10 family. As to quaternary structure, part of the 30S ribosomal subunit.

Functionally, involved in the binding of tRNA to the ribosomes. The polypeptide is Small ribosomal subunit protein uS10 (Psychrobacter arcticus (strain DSM 17307 / VKM B-2377 / 273-4)).